Consider the following 145-residue polypeptide: Lymphocyte antigen 6 complex locus protein G5c (145 aa).

The N-terminal stretch at 1–38 is a signal peptide; it reads MSGLAASWSLKPLGPHGVTQALCAVLLAVLVTMNVVLG. A UPAR/Ly6 domain is found at 55 to 145; the sequence is LHCYRCLLET…NPKNRKNTMH (91 aa). Disulfide bonds link Cys57–Cys84, Cys60–Cys69, Cys76–Cys102, Cys111–Cys128, and Cys129–Cys134. N-linked (GlcNAc...) asparagine glycosylation occurs at Asn91.

As to quaternary structure, forms oligomers. In terms of processing, N-glycosylated. In terms of tissue distribution, expression restricted to the caput of epididymis. Detected only from day 24 postnatum.

Its subcellular location is the secreted. May have a role in hematopoietic cell differentiation. This Rattus norvegicus (Rat) protein is Lymphocyte antigen 6 complex locus protein G5c (Ly6g5c).